The primary structure comprises 85 residues: MAPPLSPVSKLLIGLIRGYQLVISPLLGPHCRFRPTCSQYGIEAIRRFGMLKGSWLTLKRVLKCHPLNPGGEDPVPPKNFDNREH.

This sequence belongs to the UPF0161 family.

The protein localises to the cell inner membrane. In terms of biological role, could be involved in insertion of integral membrane proteins into the membrane. The protein is Putative membrane protein insertion efficiency factor of Sodalis glossinidius (strain morsitans).